We begin with the raw amino-acid sequence, 424 residues long: Glutamyl-tRNA reductase (424 aa).

Residues 53–56 (TCNR), S111, 116–118 (EPQ), and Q122 contribute to the substrate site. The Nucleophile role is filled by C54. An NADP(+)-binding site is contributed by 191 to 196 (GAGEMI).

The protein belongs to the glutamyl-tRNA reductase family. Homodimer.

The catalysed reaction is (S)-4-amino-5-oxopentanoate + tRNA(Glu) + NADP(+) = L-glutamyl-tRNA(Glu) + NADPH + H(+). It participates in porphyrin-containing compound metabolism; protoporphyrin-IX biosynthesis; 5-aminolevulinate from L-glutamyl-tRNA(Glu): step 1/2. Catalyzes the NADPH-dependent reduction of glutamyl-tRNA(Glu) to glutamate 1-semialdehyde (GSA). The polypeptide is Glutamyl-tRNA reductase (Bordetella bronchiseptica (strain ATCC BAA-588 / NCTC 13252 / RB50) (Alcaligenes bronchisepticus)).